Here is a 344-residue protein sequence, read N- to C-terminus: L-rhamnose-proton symporter (344 aa).

Transmembrane regions (helical) follow at residues Ala-4 to Ala-24, Trp-38 to Leu-58, Phe-68 to Ile-88, Met-101 to Ile-121, Thr-131 to Val-151, Leu-175 to Ala-195, Leu-214 to Ile-234, Leu-259 to Gly-279, Met-290 to Leu-310, and Val-323 to Ala-343.

It belongs to the L-rhamnose transporter (TC 2.A.7.6) family.

The protein resides in the cell inner membrane. The catalysed reaction is L-rhamnopyranose(in) + H(+)(in) = L-rhamnopyranose(out) + H(+)(out). In terms of biological role, uptake of L-rhamnose across the cytoplasmic membrane with the concomitant transport of protons into the cell (symport system). In Klebsiella pneumoniae subsp. pneumoniae (strain ATCC 700721 / MGH 78578), this protein is L-rhamnose-proton symporter.